The primary structure comprises 107 residues: Large ribosomal subunit protein uL24 (107 aa).

This sequence belongs to the universal ribosomal protein uL24 family. As to quaternary structure, part of the 50S ribosomal subunit.

In terms of biological role, one of two assembly initiator proteins, it binds directly to the 5'-end of the 23S rRNA, where it nucleates assembly of the 50S subunit. Its function is as follows. One of the proteins that surrounds the polypeptide exit tunnel on the outside of the subunit. This chain is Large ribosomal subunit protein uL24, found in Mesomycoplasma hyopneumoniae (strain 7448) (Mycoplasma hyopneumoniae).